A 229-amino-acid polypeptide reads, in one-letter code: Galactonate operon transcriptional repressor (229 aa).

The HTH gntR-type domain occupies Met-1–Arg-71. A DNA-binding region (H-T-H motif) is located at residues Glu-31–Arg-50. Zn(2+)-binding residues include Asp-146, His-150, and His-195.

Homodimer.

D-galactonate binds DgoR and induces a conformational change in the protein, which decreases its affinity for DNA and consequently derepresses transcription of the dgoRKADT operon. Functionally, involved in the regulation of D-galactonate metabolism. Represses the expression of the dgoRKADT operon by binding to two closely spaced inverted repeats in the cis-acting element, which overlap with the D-galactonate responsive dgo promoter. Employs a derepression mechanism using D-galactonate as a specific effector molecule. The protein is Galactonate operon transcriptional repressor of Escherichia coli (strain K12).